A 494-amino-acid chain; its full sequence is Catalase isozyme 2 (494 aa).

The disordered stretch occupies residues Met1 to Asn29. A compositionally biased stretch (polar residues) spans Pro8–Gly22. Active-site residues include His65 and Asn138. Residue Tyr348 coordinates heme.

It belongs to the catalase family. Homotetramer. Heme serves as cofactor.

The protein localises to the peroxisome. Its subcellular location is the glyoxysome. The catalysed reaction is 2 H2O2 = O2 + 2 H2O. Occurs in almost all aerobically respiring organisms and serves to protect cells from the toxic effects of hydrogen peroxide. The sequence is that of Catalase isozyme 2 (CAT2) from Hordeum vulgare (Barley).